A 611-amino-acid chain; its full sequence is Zinc metalloproteinase-disintegrin-like ohanin (611 aa).

Residues 1–20 (MIQVLLVTICLVVFPYQGSS) form the signal peptide. The propeptide occupies 21 to 187 (IILESGKVND…WESDEPIEKI (167 aa)). The 196-residue stretch at 198–393 (KYLELYIVAD…DTPQCLINKP (196 aa)) folds into the Peptidase M12B domain. 2 N-linked (GlcNAc...) asparagine glycosylation sites follow: Asn217 and Asn260. 3 disulfide bridges follow: Cys307–Cys388, Cys347–Cys372, and Cys349–Cys354. Residue His332 coordinates Zn(2+). The active site involves Glu333. Zn(2+)-binding residues include His336 and His342. An N-linked (GlcNAc...) asparagine glycan is attached at Asn395. In terms of domain architecture, Disintegrin spans 401–487 (NAVCGNYVEE…ECPMDRFHKN (87 aa)). 14 cysteine pairs are disulfide-bonded: Cys404–Cys433, Cys415–Cys428, Cys417–Cys423, Cys427–Cys450, Cys441–Cys447, Cys446–Cys472, Cys459–Cys479, Cys466–Cys498, Cys491–Cys503, Cys510–Cys560, Cys525–Cys578, Cys538–Cys548, Cys555–Cys603, and Cys597–Cys608. A D/ECD-tripeptide motif is present at residues 465-467 (ECD). N-linked (GlcNAc...) asparagine glycosylation occurs at Asn528.

Belongs to the venom metalloproteinase (M12B) family. P-III subfamily. P-IIIa sub-subfamily. As to quaternary structure, monomer. The cofactor is Zn(2+). Expressed by the venom gland.

It is found in the secreted. Inhibited by EDTA, but not by PMSF. In terms of biological role, snake venom zinc metalloproteinase that has hemorrhagic activity. Inhibits ADP-, TMVA- and stejnulxin-induced platelet aggregation in a dose-dependent manner (on washed platelet, but not on platelet rich plasm). Also specifically degrades alpha-chain of fibrinogen (FGA). In Ophiophagus hannah (King cobra), this protein is Zinc metalloproteinase-disintegrin-like ohanin.